Consider the following 334-residue polypeptide: Holliday junction branch migration complex subunit RuvB (334 aa).

The tract at residues 4–184 is large ATPase domain (RuvB-L); the sequence is ADRLVSAGVI…FGIVQRLEFY (181 aa). ATP contacts are provided by residues Ile-23, Arg-24, Gly-65, Lys-68, Thr-69, Thr-70, 131 to 133, Arg-174, Tyr-184, and Arg-221; that span reads EDY. Thr-69 contributes to the Mg(2+) binding site. The small ATPAse domain (RuvB-S) stretch occupies residues 185–255; the sequence is RVEDLQHIVG…VASRALDMLS (71 aa). The interval 258 to 334 is head domain (RuvB-H); sequence SEGFDYMDRK…YKHFGITREG (77 aa). DNA contacts are provided by Arg-294, Arg-313, and Arg-318.

This sequence belongs to the RuvB family. Homohexamer. Forms an RuvA(8)-RuvB(12)-Holliday junction (HJ) complex. HJ DNA is sandwiched between 2 RuvA tetramers; dsDNA enters through RuvA and exits via RuvB. An RuvB hexamer assembles on each DNA strand where it exits the tetramer. Each RuvB hexamer is contacted by two RuvA subunits (via domain III) on 2 adjacent RuvB subunits; this complex drives branch migration. In the full resolvosome a probable DNA-RuvA(4)-RuvB(12)-RuvC(2) complex forms which resolves the HJ.

It is found in the cytoplasm. The catalysed reaction is ATP + H2O = ADP + phosphate + H(+). In terms of biological role, the RuvA-RuvB-RuvC complex processes Holliday junction (HJ) DNA during genetic recombination and DNA repair, while the RuvA-RuvB complex plays an important role in the rescue of blocked DNA replication forks via replication fork reversal (RFR). RuvA specifically binds to HJ cruciform DNA, conferring on it an open structure. The RuvB hexamer acts as an ATP-dependent pump, pulling dsDNA into and through the RuvAB complex. RuvB forms 2 homohexamers on either side of HJ DNA bound by 1 or 2 RuvA tetramers; 4 subunits per hexamer contact DNA at a time. Coordinated motions by a converter formed by DNA-disengaged RuvB subunits stimulates ATP hydrolysis and nucleotide exchange. Immobilization of the converter enables RuvB to convert the ATP-contained energy into a lever motion, pulling 2 nucleotides of DNA out of the RuvA tetramer per ATP hydrolyzed, thus driving DNA branch migration. The RuvB motors rotate together with the DNA substrate, which together with the progressing nucleotide cycle form the mechanistic basis for DNA recombination by continuous HJ branch migration. Branch migration allows RuvC to scan DNA until it finds its consensus sequence, where it cleaves and resolves cruciform DNA. This is Holliday junction branch migration complex subunit RuvB from Erwinia tasmaniensis (strain DSM 17950 / CFBP 7177 / CIP 109463 / NCPPB 4357 / Et1/99).